The sequence spans 347 residues: Tetracycline resistance determinant (347 aa).

8 consecutive transmembrane segments (helical) span residues 3-20, 30-52, 73-95, 108-130, 137-156, 161-183, 204-226, and 294-316; these read VLGA…LIVA, SPAA…PVEL, CSAV…PLFL, LVVI…LIAS, LAIV…ATTG, MWGI…TVIT, CAGQ…AVAL, and GFHI…TWFL. The interval 321 to 347 is disordered; that stretch reads EETAPEEERPAESGAGAKNGPLPASDA.

It belongs to the major facilitator superfamily. TCR/Tet family.

Its subcellular location is the cell membrane. Functionally, resistance to tetracycline by an active tetracycline efflux. This is an energy-dependent process that decreases the accumulation of the antibiotic in whole cells. This protein functions as a metal-tetracycline/H(+) antiporter. The chain is Tetracycline resistance determinant (tetB) from Streptomyces rimosus.